The primary structure comprises 305 residues: MKMAIVGGPTAVGKTDLMVEVCEEINAEIVSMDSRQIYRYMDIGTAKPTPEQRKRVPHHMIDILDPDEYYNAFLYRKDSLKAVEDILKRGKIPVYVGGTGLYADALVRGIFEGVPADENIRKELRELERREPGILRKMLEEFDPEAATRIHPNDLKRTIRALEVYMKTGRRISELQKETKGDDRFFIIVLTRERYDLYDRINRRVDRMVEMGLVDEVKRLLSMGYSKDLNSMKTIGYKEVIEYLEGKYDFEKMVHLIKRNTRHFARRQIIWFKRYENAIWYNLTFVSKEELKKTLKELIVKNFSV.

Residue 8 to 15 coordinates ATP; it reads GPTAVGKT. 10-15 contributes to the substrate binding site; sequence TAVGKT. The interaction with substrate tRNA stretch occupies residues 33-36; it reads DSRQ.

It belongs to the IPP transferase family. As to quaternary structure, monomer. Mg(2+) is required as a cofactor.

It carries out the reaction adenosine(37) in tRNA + dimethylallyl diphosphate = N(6)-dimethylallyladenosine(37) in tRNA + diphosphate. Its function is as follows. Catalyzes the transfer of a dimethylallyl group onto the adenine at position 37 in tRNAs that read codons beginning with uridine, leading to the formation of N6-(dimethylallyl)adenosine (i(6)A). This Thermotoga neapolitana (strain ATCC 49049 / DSM 4359 / NBRC 107923 / NS-E) protein is tRNA dimethylallyltransferase.